The following is a 312-amino-acid chain: Methionyl-tRNA formyltransferase (312 aa).

A (6S)-5,6,7,8-tetrahydrofolate-binding site is contributed by Ser-112–Pro-115.

It belongs to the Fmt family.

The catalysed reaction is L-methionyl-tRNA(fMet) + (6R)-10-formyltetrahydrofolate = N-formyl-L-methionyl-tRNA(fMet) + (6S)-5,6,7,8-tetrahydrofolate + H(+). Attaches a formyl group to the free amino group of methionyl-tRNA(fMet). The formyl group appears to play a dual role in the initiator identity of N-formylmethionyl-tRNA by promoting its recognition by IF2 and preventing the misappropriation of this tRNA by the elongation apparatus. In Dehalococcoides mccartyi (strain CBDB1), this protein is Methionyl-tRNA formyltransferase.